The primary structure comprises 271 residues: Probable CAAX prenyl protease 2 (271 aa).

The next 2 helical transmembrane spans lie at Val3–Val23 and Cys42–Pro62. Residues Glu126 and His160 each act as proton donor/acceptor in the active site. Helical transmembrane passes span Ala174–Trp194 and Ile236–Asp256.

It belongs to the peptidase U48 family.

The protein resides in the endoplasmic reticulum membrane. It catalyses the reaction Hydrolyzes the peptide bond -P2-(S-farnesyl or geranylgeranyl)C-P1'-P2'-P3'-COOH where P1' and P2' are amino acids with aliphatic sidechains and P3' is any C-terminal residue.. Protease involved in the processing of a variety of prenylated proteins containing the C-terminal CAAX motif, where C is a cysteine modified with an isoprenoid lipid, A is an aliphatic amino acid and X is any C-terminal amino acid. Proteolytically removes the C-terminal three residues of farnesylated proteins, leaving the prenylated cysteine as the new C-terminus. This chain is Probable CAAX prenyl protease 2, found in Schizosaccharomyces pombe (strain 972 / ATCC 24843) (Fission yeast).